A 460-amino-acid polypeptide reads, in one-letter code: Chromosomal replication initiator protein DnaA (460 aa).

Positions 1 to 78 (MENFWQACSA…VPVEVQFVLD (78 aa)) are domain I, interacts with DnaA modulators. The segment at 78 to 123 (DPRLVAARRPAAQASVVSDRADDVPSNVLEPIPSNATDHTPRRDQS) is domain II. The segment at 124–340 (RINTALTFDS…GALRKILAYS (217 aa)) is domain III, AAA+ region. ATP is bound by residues Gly-168, Gly-170, Lys-171, and Thr-172. The segment at 341–460 (RFHGKDITIE…LHVLEQTLKG (120 aa)) is domain IV, binds dsDNA.

The protein belongs to the DnaA family. Oligomerizes as a right-handed, spiral filament on DNA at oriC.

The protein localises to the cytoplasm. Plays an essential role in the initiation and regulation of chromosomal replication. ATP-DnaA binds to the origin of replication (oriC) to initiate formation of the DNA replication initiation complex once per cell cycle. Binds the DnaA box (a 9 base pair repeat at the origin) and separates the double-stranded (ds)DNA. Forms a right-handed helical filament on oriC DNA; dsDNA binds to the exterior of the filament while single-stranded (ss)DNA is stabiized in the filament's interior. The ATP-DnaA-oriC complex binds and stabilizes one strand of the AT-rich DNA unwinding element (DUE), permitting loading of DNA polymerase. After initiation quickly degrades to an ADP-DnaA complex that is not apt for DNA replication. Binds acidic phospholipids. This Herminiimonas arsenicoxydans protein is Chromosomal replication initiator protein DnaA.